A 672-amino-acid chain; its full sequence is Spermatid perinuclear RNA-binding protein (672 aa).

A DZF domain is found at 5-363 (RSFANDDRHV…ALKRPFEDGL (359 aa)). 2 disordered regions span residues 52–73 (TNKGTKTEGETEVKKDEAGENY) and 349–371 (GAGSSALKRPFEDGLGDDKDPNK). Residues 357 to 371 (RPFEDGLGDDKDPNK) show a composition bias toward basic and acidic residues. The region spanning 387–453 (DLMNALMRLN…AVKVLQAMGY (67 aa)) is the DRBM 1 domain. The segment covering 466–476 (SDEKSDNESKN) has biased composition (basic and acidic residues). The disordered stretch occupies residues 466–499 (SDEKSDNESKNETVSSNSSNNTGNSTTETSSTLE). Over residues 477 to 497 (ETVSSNSSNNTGNSTTETSST) the composition is skewed to low complexity. Positions 510–576 (SGKNPVMELN…ALAALEKLFS (67 aa)) constitute a DRBM 2 domain. Asymmetric dimethylarginine occurs at positions 612 and 617.

Interacts with EIF2AK2. Associates with microtubules; it is unsure whether such interaction is direct or indirect.

It is found in the cytoplasm. Its function is as follows. Involved in spermatogenesis and sperm function. Plays a role in regulation of cell growth. Binds to double-stranded DNA and RNA. Binds most efficiently to poly(I:C) RNA than to poly(dI:dC) DNA. Binds also to single-stranded poly(G) RNA. Binds non-specifically to the mRNA PRM1 3'-UTR and adenovirus VA RNA. The protein is Spermatid perinuclear RNA-binding protein (STRBP) of Homo sapiens (Human).